The sequence spans 208 residues: Imidazoleglycerol-phosphate dehydratase (208 aa).

This sequence belongs to the imidazoleglycerol-phosphate dehydratase family.

It localises to the cytoplasm. It carries out the reaction D-erythro-1-(imidazol-4-yl)glycerol 3-phosphate = 3-(imidazol-4-yl)-2-oxopropyl phosphate + H2O. It participates in amino-acid biosynthesis; L-histidine biosynthesis; L-histidine from 5-phospho-alpha-D-ribose 1-diphosphate: step 6/9. This chain is Imidazoleglycerol-phosphate dehydratase, found in Psychrobacter sp. (strain PRwf-1).